Here is a 115-residue protein sequence, read N- to C-terminus: Guanylin (115 aa).

An N-terminal signal peptide occupies residues 1–21 (MNAFLLSALCLLGAWAALAGG). Cystine bridges form between Cys69/Cys82, Cys104/Cys112, and Cys107/Cys115.

The protein belongs to the guanylin family. Highly expressed in ileum and colon. Found in plasma.

It localises to the secreted. Its function is as follows. Endogenous activator of intestinal guanylate cyclase. It stimulates this enzyme through the same receptor binding region as the heat-stable enterotoxins. The protein is Guanylin (GUCA2A) of Homo sapiens (Human).